Here is a 223-residue protein sequence, read N- to C-terminus: Glutathione S-transferase alpha I (223 aa).

Met1 carries the N-acetylmethionine modification. Position 2 is an N-acetylalanine; in Glutathione S-transferase alpha I, N-terminally processed (Ala2). The GST N-terminal domain maps to 3 to 83 (RKPLLHYFNG…YVANKHNLYG (81 aa)). An N6-succinyllysine modification is found at Lys4. Residues Tyr9, Arg45, 54–55 (QV), and 67–68 (QT) contribute to the glutathione site. In terms of domain architecture, GST C-terminal spans 85-208 (DMKERALIDM…QPGSQRKPPM (124 aa)).

The protein belongs to the GST superfamily. Alpha family. In terms of assembly, homodimer or heterodimer of GSTA1 and GSTA2. As to expression, liver and lung.

The protein resides in the cytoplasm. The enzyme catalyses RX + glutathione = an S-substituted glutathione + a halide anion + H(+). It carries out the reaction prostaglandin A2 + glutathione = prostaglandin A2-S-(R)-glutathione. The catalysed reaction is prostaglandin J2 + glutathione = prostaglandin J2-S-(R)-glutathione. It catalyses the reaction (13S)-hydroperoxy-(9Z,11E)-octadecadienoate + 2 glutathione = (13S)-hydroxy-(9Z,11E)-octadecadienoate + glutathione disulfide + H2O. The enzyme catalyses androst-5-ene-3,17-dione = androst-4-ene-3,17-dione. Glutathione S-transferase that catalyzes the nucleophilic attack of the sulfur atom of glutathione on the electrophilic groups of a wide range of exogenous and endogenous compounds. Involved in the formation of glutathione conjugates of both prostaglandin A2 (PGA2) and prostaglandin J2 (PGJ2). It also catalyzes the isomerization of D5-androstene-3,17-dione (AD) into D4-androstene-3,17-dione and may therefore play an important role in hormone biosynthesis. Through its glutathione-dependent peroxidase activity toward the fatty acid hydroperoxide (13S)-hydroperoxy-(9Z,11E)-octadecadienoate/13-HPODE it is also involved in the metabolism of oxidized linoleic acid. In Oryctolagus cuniculus (Rabbit), this protein is Glutathione S-transferase alpha I.